A 232-amino-acid chain; its full sequence is Probable GTP-binding protein EngB (232 aa).

Residues 13–188 form the EngB-type G domain; sequence IGLEVAFAGR…AGVMGNWYEY (176 aa). GTP-binding positions include 21-28, 48-52, 67-70, 134-137, and 167-169; these read GRSNAGKS, GRTQM, DLPG, TKAD, and FSA. Residues Ser28 and Thr50 each coordinate Mg(2+).

The protein belongs to the TRAFAC class TrmE-Era-EngA-EngB-Septin-like GTPase superfamily. EngB GTPase family. Mg(2+) is required as a cofactor.

Its function is as follows. Necessary for normal cell division and for the maintenance of normal septation. In Psychrobacter arcticus (strain DSM 17307 / VKM B-2377 / 273-4), this protein is Probable GTP-binding protein EngB.